The following is a 465-amino-acid chain: Box C/D snoRNA protein 1 (465 aa).

Residues 1-72 (MEFAAENEGK…GSRQRPEEIP (72 aa)) are disordered. Ser25 is modified (phosphoserine). Residues 56–70 (EIGDGEEGSRQRPEE) show a composition bias toward basic and acidic residues. Glycyl lysine isopeptide (Lys-Gly) (interchain with G-Cter in SUMO2) cross-links involve residues Lys79, Lys108, Lys118, Lys138, Lys148, Lys157, Lys168, Lys178, and Lys195. 8 residues coordinate Zn(2+): Cys215, Cys218, Cys227, Cys230, Cys235, Cys239, His243, and Cys249. An HIT-type zinc finger spans residues 215 to 249 (CETCGTEEAKYRCPRCMRYSCSLPCVKKHKAELTC). Lys454 participates in a covalent cross-link: Glycyl lysine isopeptide (Lys-Gly) (interchain with G-Cter in SUMO2).

This sequence belongs to the BCD1 family. As to quaternary structure, interacts with FBL, SNU13, NOP58, NUFIP1, RUVBL1, RUVBL2 and TAF9. Interacts (via HIT-type zinc finger) with the RUVBL1/RUVBL2 complex in the presence of ADP.

Functionally, required for box C/D snoRNAs accumulation involved in snoRNA processing, snoRNA transport to the nucleolus and ribosome biogenesis. This is Box C/D snoRNA protein 1 (ZNHIT6) from Pongo abelii (Sumatran orangutan).